A 177-amino-acid polypeptide reads, in one-letter code: Large ribosomal subunit protein uL6 (177 aa).

It belongs to the universal ribosomal protein uL6 family. Part of the 50S ribosomal subunit.

Functionally, this protein binds to the 23S rRNA, and is important in its secondary structure. It is located near the subunit interface in the base of the L7/L12 stalk, and near the tRNA binding site of the peptidyltransferase center. The chain is Large ribosomal subunit protein uL6 from Rickettsia bellii (strain OSU 85-389).